The sequence spans 543 residues: Tetrahydroberberine oxidase (543 aa).

The signal sequence occupies residues 1-26 (MIPNSSSSSILSLLVLLLFSTSSSWA). C37 and C97 are joined by a disulfide. Residues N54, N74, N135, N142, N162, N295, N335, N440, and N482 are each glycosylated (N-linked (GlcNAc...) asparagine). In terms of domain architecture, FAD-binding PCMH-type spans 75–250 (STQKPEFIIT…LSWKVKLVPV (176 aa)). The 6-(S-cysteinyl)-8alpha-(pros-histidyl)-FAD (His-Cys) cross-link spans 112–175 (HDVEGLSYVS…NTLGFPAGFC (64 aa)).

Belongs to the oxygen-dependent FAD-linked oxidoreductase family. Requires FAD as cofactor. The FAD cofactor is bound via a bicovalent 6-S-cysteinyl, 8alpha-N1-histidyl FAD linkage.

The catalysed reaction is (S)-canadine + 2 O2 + H(+) = berberine + 2 H2O2. Its function is as follows. Catalyzes the oxidation of different tetrahydroprotoberberines, such as (S)-canadine, (S)-scoulerine and (S)-tetrahydropalmatine. The sequence is that of Tetrahydroberberine oxidase from Argemone mexicana (Mexican prickly poppy).